The primary structure comprises 348 residues: Alcohol dehydrogenase 1 (348 aa).

Zn(2+)-binding residues include Cys-44, His-67, Cys-98, Cys-101, Cys-104, Cys-112, and Cys-154. NAD(+) contacts are provided by residues 178–184, Asp-202, Lys-207, 269–271, and Arg-341; these read GACGGLG and VGL.

It belongs to the zinc-containing alcohol dehydrogenase family. As to quaternary structure, homotetramer. Zn(2+) is required as a cofactor.

The protein localises to the cytoplasm. The enzyme catalyses a primary alcohol + NAD(+) = an aldehyde + NADH + H(+). It catalyses the reaction a secondary alcohol + NAD(+) = a ketone + NADH + H(+). This is Alcohol dehydrogenase 1 (ADH1) from Kluyveromyces marxianus (Yeast).